A 340-amino-acid chain; its full sequence is Short-chain dehydrogenase/reductase prx1 (340 aa).

NADP(+) contacts are provided by Ile60, Lys84, Asp104, Asn131, and Lys162. Ser184 (proton donor) is an active-site residue. Residues Tyr210 and Lys214 each coordinate NADP(+). Residue Tyr210 is the Proton acceptor of the active site. Lys214 acts as the Lowers pKa of active site Tyr in catalysis.

It belongs to the short-chain dehydrogenases/reductases (SDR) family.

Its pathway is sesquiterpene biosynthesis. Functionally, short-chain dehydrogenase/reductase; part of the gene cluster that mediates the biosynthesis of PR-toxin, a bicyclic sesquiterpene belonging to the eremophilane class and acting as a mycotoxin. The first step of the pathway is catalyzed by the aristolochene synthase which performs the cyclization of trans,trans-farnesyl diphosphate (FPP) to the bicyclic sesquiterpene aristolochene. Following the formation of aristolochene, the non-oxygenated aristolochene is converted to the trioxygenated intermediate eremofortin B, via 7-epi-neopetasone. This conversion appears to involve three enzymes, a hydroxysterol oxidase-like enzyme, the quinone-oxidase prx3 that forms the quinone-type-structure in the bicyclic nucleus of aristolochene with the C8-oxo group and the C-3 hydroxyl group, and the P450 monooxygenase ORF6 that introduces the epoxide at the double bond between carbons 1 and 2. No monoxy or dioxy-intermediates have been reported to be released to the broth, so these three early oxidative reactions may be coupled together. Eremofortin B is further oxidized by another P450 monooxygenase, that introduces a second epoxide between carbons 7 and 11 prior to acetylation to eremofortin A by the acetyltransferase ORF8. The second epoxidation may be performed by a second P450 monooxygenase. After the acetylation step, eremofortin A is converted to eremofortin C and then to PR-toxin. First the conversion of eremofortin A to eremofortin C proceeds by oxidation of the side chain of the molecule at C-12 and is catalyzed by the short-chain oxidoreductase prx1. The cytochrome P450 monooxygenase ORF6 is probably also involved in this step. The primary alcohol formed at C-12 is finally oxidized by the short-chain alcohol dehydrogenase prx4 that forms PR-toxin. In Penicillium roqueforti (strain FM164), this protein is Short-chain dehydrogenase/reductase prx1.